The sequence spans 221 residues: Thiamine-phosphate synthase (221 aa).

Residues 44–48 and Asn-79 contribute to the 4-amino-2-methyl-5-(diphosphooxymethyl)pyrimidine site; that span reads QFREK. Residues Asp-80 and Asp-99 each contribute to the Mg(2+) site. Ser-117 contacts 4-amino-2-methyl-5-(diphosphooxymethyl)pyrimidine. Residue 143 to 145 participates in 2-[(2R,5Z)-2-carboxy-4-methylthiazol-5(2H)-ylidene]ethyl phosphate binding; that stretch reads TRS. Lys-146 is a 4-amino-2-methyl-5-(diphosphooxymethyl)pyrimidine binding site. Residues Gly-175 and 195–196 each bind 2-[(2R,5Z)-2-carboxy-4-methylthiazol-5(2H)-ylidene]ethyl phosphate; that span reads IS.

It belongs to the thiamine-phosphate synthase family. Mg(2+) serves as cofactor.

The enzyme catalyses 2-[(2R,5Z)-2-carboxy-4-methylthiazol-5(2H)-ylidene]ethyl phosphate + 4-amino-2-methyl-5-(diphosphooxymethyl)pyrimidine + 2 H(+) = thiamine phosphate + CO2 + diphosphate. It catalyses the reaction 2-(2-carboxy-4-methylthiazol-5-yl)ethyl phosphate + 4-amino-2-methyl-5-(diphosphooxymethyl)pyrimidine + 2 H(+) = thiamine phosphate + CO2 + diphosphate. The catalysed reaction is 4-methyl-5-(2-phosphooxyethyl)-thiazole + 4-amino-2-methyl-5-(diphosphooxymethyl)pyrimidine + H(+) = thiamine phosphate + diphosphate. It participates in cofactor biosynthesis; thiamine diphosphate biosynthesis; thiamine phosphate from 4-amino-2-methyl-5-diphosphomethylpyrimidine and 4-methyl-5-(2-phosphoethyl)-thiazole: step 1/1. Condenses 4-methyl-5-(beta-hydroxyethyl)thiazole monophosphate (THZ-P) and 2-methyl-4-amino-5-hydroxymethyl pyrimidine pyrophosphate (HMP-PP) to form thiamine monophosphate (TMP). This chain is Thiamine-phosphate synthase, found in Geobacillus thermodenitrificans (strain NG80-2).